The following is a 581-amino-acid chain: MMNPDGGDGDRLEAAGAGSSSAQQGHPTMEWRFAQVFGERAAGEDVQEVDIISAIEFDKSGDHLATGDRGGRVVLFERTDARDNASRREMERQDAPITRHPEFRYKSEFQSHEPEFDYLKSLEIEEKINKIRWCQTANNSLSLLSTNDKTIKYWKVQEKKVKQVSVMNLDSRSVGTGTSSSASTSSSRGLLPNGGCSDKSSFLNSDILFPPGGYPSLRLPVVVASQDVNLVARCRRVYAHAHDYHINSISTNSDGETYISADDLRINLWNLEINNQSFNIVDVKPPNMEDLTEVITCAEFHPTHCNTLAYSSSKGSIRLIDLRQSALCDNHSKIFEEHEAPGSRSFFTEIIASISDIKFSRDGRYILSRDYMTLKLWDLNMDSGPVSTFQVHEHLRPKLCDLYENDSIFDKFECCLSGDGLHVATGSYGNLFRVFGCTPGSTEATTLEASRNPMRRQIVNPTRPTRTLTSLARGVRRGGENQGVDANGNSFDFSTKLLHLAWHPTENSIACAAANSLYMYYARRCLRKFIVFGSLLEAACLHMQPEIWCRMLSSIPPLGPKEAVDAHKMAFVAVTASLLIL.

Positions 1–27 (MMNPDGGDGDRLEAAGAGSSSAQQGHP) are disordered. Positions 14 to 25 (AAGAGSSSAQQG) are enriched in low complexity. WD repeat units follow at residues 47–86 (QEVD…DNAS) and 123–164 (EIEE…VKQV). The span at 172-189 (RSVGTGTSSSASTSSSRG) shows a compositional bias: low complexity. The segment at 172-192 (RSVGTGTSSSASTSSSRGLLP) is disordered. WD repeat units follow at residues 241–279 (AHDY…QSFN), 290–330 (DLTE…LCDN), 349–387 (EIIA…GPVS), and 492–530 (DFST…RKFI).

It belongs to the phosphatase 2A regulatory subunit B family. In terms of assembly, PP2A consists of a common heteromeric enzyme, composed of a catalytic subunit (subunits C), a constant regulatory subunit (subunit A), and a variety of regulatory subunits such as subunits B (the R2/B/PR55/B55, R3/B''/PR72/PR130/PR59 and R5/B'/B56 families).

In terms of biological role, the B regulatory subunit may modulate substrate selectivity and catalytic activity, and may also direct the localization of the catalytic enzyme to a particular subcellular compartment. The polypeptide is Serine/threonine protein phosphatase 2A 55 kDa regulatory subunit B alpha isoform (Oryza sativa subsp. japonica (Rice)).